Consider the following 691-residue polypeptide: DNA ligase (691 aa).

NAD(+)-binding positions include 41–45, 91–92, and E121; these read DAEFD and SL. K123 serves as the catalytic N6-AMP-lysine intermediate. Residues R144, E184, K300, and K324 each contribute to the NAD(+) site. Residues C418, C421, C437, and C443 each contribute to the Zn(2+) site. In terms of domain architecture, BRCT spans 607-691; sequence SVPRTLAGLT…LLADGPASRT (85 aa).

The protein belongs to the NAD-dependent DNA ligase family. LigA subfamily. The cofactor is Mg(2+). Requires Mn(2+) as cofactor.

It carries out the reaction NAD(+) + (deoxyribonucleotide)n-3'-hydroxyl + 5'-phospho-(deoxyribonucleotide)m = (deoxyribonucleotide)n+m + AMP + beta-nicotinamide D-nucleotide.. DNA ligase that catalyzes the formation of phosphodiester linkages between 5'-phosphoryl and 3'-hydroxyl groups in double-stranded DNA using NAD as a coenzyme and as the energy source for the reaction. It is essential for DNA replication and repair of damaged DNA. This Mycobacterium tuberculosis (strain ATCC 25177 / H37Ra) protein is DNA ligase.